Here is a 417-residue protein sequence, read N- to C-terminus: MSDPIRTKPKSSMQIDNAPTPHNTPASVLNPSYLKNGNPVRAQAQEQDDKIGTINEEDILANQPLLLQSIQDRLGSLVGQDSGYVGGLPKNVKEKLLSLKTLQSELFEVEKEFQVEMFELENKFLQKYKPIWEQRSRIISGQEQPKPEQIAKGQEIVESLNETELLVDEEEKAQNDSEEEQVKGIPSFWLTALENLPIVCDTITDRDAEVLEYLQDIGLEYLTDGRPGFKLLFRFDSSANPFFTNDILCKTYFYQKELGYSGDFIYDHAEGCEISWKDNAHNVTVDLEMRKQRNKTTKQVRTIEKITPIESFFNFFDPPKIQNEDQDEELEEDLEERLALDYSIGEQLKDKLIPRAVDWFTGAALEFEFEEDEEEADEDEDEEEDDDHGLEDDDGESAEEQDDFAGRPEQAPECKQS.

Residues 1 to 47 (MSDPIRTKPKSSMQIDNAPTPHNTPASVLNPSYLKNGNPVRAQAQEQ) form a disordered region. A compositionally biased stretch (polar residues) spans 10-35 (KSSMQIDNAPTPHNTPASVLNPSYLK). Residues Thr-20 and Thr-24 each carry the phosphothreonine modification. Phosphoserine is present on Ser-27. Lys-50 participates in a covalent cross-link: Glycyl lysine isopeptide (Lys-Gly) (interchain with G-Cter in ubiquitin). Thr-53 carries the phosphothreonine modification. Ser-69, Ser-76, Ser-82, Ser-98, Ser-104, and Ser-140 each carry phosphoserine. Residues 143–362 (EQPKPEQIAK…IPRAVDWFTG (220 aa)) are interaction with NBA1. Phosphoserine; by CK2 occurs at positions 159 and 177. A DNA-binding region (H-T-H motif) is located at residues 330-356 (LEEDLEERLALDYSIGEQLKDKLIPRA). The interval 364–417 (ALEFEFEEDEEEADEDEDEEEDDDHGLEDDDGESAEEQDDFAGRPEQAPECKQS) is disordered. Positions 367–403 (FEFEEDEEEADEDEDEEEDDDHGLEDDDGESAEEQDD) are enriched in acidic residues. The residue at position 397 (Ser-397) is a Phosphoserine; by CK2. The span at 404-417 (FAGRPEQAPECKQS) shows a compositional bias: basic and acidic residues.

It belongs to the nucleosome assembly protein (NAP) family. In terms of assembly, component of the GIN4 complex composed of at least BNI5, CDC3, CDC10, CDC11, CDC12, GIN4, NAP1 and SHS1 which forms a ring at the bud neck. Homodimer (in-vitro). Interacts with the B-type cyclin CLB2. Interacts with 60S ribosomal protein L18 (RPL18A or RPL18B), CKA2, CKI1, eukaryotic elongation factor 1 complex eEF1A (TEF1 or TEF2), FOL1, HSC82, HTA2, HTB2, HTZ1, KAP114, KCC4, NIS1, SSA1, SSA2, SSB1, SSC1, SHM1, SIP5 and TCO89. Interacts with NBA1. Interacts with histone H3/H4 heterodimers. In terms of processing, phosphorylation by CK2 is required for normal progression through S phase. CK2 phosphorylation is not required for correct bud formation nor histone binding.

It is found in the cytoplasm. It localises to the nucleus. Its subcellular location is the bud neck. Its function is as follows. Acidic protein, which assembles histones into an octamer (in vitro). Involved in the regulation of the localization and the function of the septins during mitosis. Involved in the function of B-type cyclins. The chain is Nucleosome assembly protein from Saccharomyces cerevisiae (strain ATCC 204508 / S288c) (Baker's yeast).